Consider the following 97-residue polypeptide: Large ribosomal subunit protein eL21 (97 aa).

Residues 1 to 12 show a composition bias toward polar residues; the sequence is MPSSNGPRQATR. The disordered stretch occupies residues 1-35; that stretch reads MPSSNGPRQATRNKLKNDARERGTSPPQRSIEEYD.

It belongs to the eukaryotic ribosomal protein eL21 family.

The chain is Large ribosomal subunit protein eL21 from Natronomonas pharaonis (strain ATCC 35678 / DSM 2160 / CIP 103997 / JCM 8858 / NBRC 14720 / NCIMB 2260 / Gabara) (Halobacterium pharaonis).